We begin with the raw amino-acid sequence, 483 residues long: Glutamyl-tRNA(Gln) amidotransferase subunit A (483 aa).

Residues lysine 76 and serine 151 each act as charge relay system in the active site. Residue serine 175 is the Acyl-ester intermediate of the active site.

This sequence belongs to the amidase family. GatA subfamily. Heterotrimer of A, B and C subunits.

It catalyses the reaction L-glutamyl-tRNA(Gln) + L-glutamine + ATP + H2O = L-glutaminyl-tRNA(Gln) + L-glutamate + ADP + phosphate + H(+). Allows the formation of correctly charged Gln-tRNA(Gln) through the transamidation of misacylated Glu-tRNA(Gln) in organisms which lack glutaminyl-tRNA synthetase. The reaction takes place in the presence of glutamine and ATP through an activated gamma-phospho-Glu-tRNA(Gln). The polypeptide is Glutamyl-tRNA(Gln) amidotransferase subunit A (Pseudomonas putida (strain ATCC 700007 / DSM 6899 / JCM 31910 / BCRC 17059 / LMG 24140 / F1)).